The following is a 339-amino-acid chain: Serine racemase (339 aa).

E13 provides a ligand contact to Mg(2+). The ATP site is built by S31, S32, I33, K51, and T52. K56 functions as the Proton acceptor in the catalytic mechanism. Residue K56 is modified to N6-(pyridoxal phosphate)lysine. A Ca(2+)-binding site is contributed by P69. Phosphothreonine is present on T71. T81 lines the Ca(2+) pocket. S84 (proton acceptor) is an active-site residue. N86 lines the pyridoxal 5'-phosphate pocket. Q89 is an ATP binding site. C113 bears the S-nitrosocysteine mark. ATP is bound at residue Y121. A pyridoxal 5'-phosphate-binding site is contributed by N154. Residue D178 participates in Mg(2+) binding. Pyridoxal 5'-phosphate is bound by residues G185, G186, G187, G188, and M189. Mg(2+) is bound by residues E210, A214, D216, and N247. 4 residues coordinate Ca(2+): E210, A214, D216, and N247. Mn(2+)-binding residues include E210, A214, and D216. K279 is a binding site for ATP. A pyridoxal 5'-phosphate-binding site is contributed by S313. N316 is a binding site for ATP.

Belongs to the serine/threonine dehydratase family. Homodimer. The cofactor is Mg(2+). Mn(2+) is required as a cofactor. Requires Ca(2+) as cofactor. Pyridoxal 5'-phosphate serves as cofactor. In terms of processing, S-nitrosylated, leading to decrease the enzyme activity. Expressed in the hippocampus (at protein level). Expressed in the small intestine.

The catalysed reaction is L-serine = D-serine. It carries out the reaction D-serine = pyruvate + NH4(+). It catalyses the reaction L-serine = pyruvate + NH4(+). Allosterically activated by magnesium, and possibly also other divalent metal cations. Allosterically activated by ATP, ADP or GTP. In terms of biological role, catalyzes the synthesis of D-serine from L-serine. D-serine is a key coagonist with glutamate at NMDA receptors. Has dehydratase activity towards both L-serine and D-serine. The sequence is that of Serine racemase (Srr) from Mus musculus (Mouse).